The chain runs to 346 residues: UDP-3-O-acylglucosamine N-acyltransferase (346 aa).

H240 serves as the catalytic Proton acceptor.

This sequence belongs to the transferase hexapeptide repeat family. LpxD subfamily. In terms of assembly, homotrimer.

It carries out the reaction a UDP-3-O-[(3R)-3-hydroxyacyl]-alpha-D-glucosamine + a (3R)-hydroxyacyl-[ACP] = a UDP-2-N,3-O-bis[(3R)-3-hydroxyacyl]-alpha-D-glucosamine + holo-[ACP] + H(+). Its pathway is bacterial outer membrane biogenesis; LPS lipid A biosynthesis. In terms of biological role, catalyzes the N-acylation of UDP-3-O-acylglucosamine using 3-hydroxyacyl-ACP as the acyl donor. Is involved in the biosynthesis of lipid A, a phosphorylated glycolipid that anchors the lipopolysaccharide to the outer membrane of the cell. In Phocaeicola vulgatus (strain ATCC 8482 / DSM 1447 / JCM 5826 / CCUG 4940 / NBRC 14291 / NCTC 11154) (Bacteroides vulgatus), this protein is UDP-3-O-acylglucosamine N-acyltransferase.